The primary structure comprises 348 residues: L-threonine 3-dehydrogenase (348 aa).

C42 is a Zn(2+) binding site. Residues T44 and H47 each act as charge relay system in the active site. Zn(2+) is bound by residues H67, E68, C97, C100, C103, and C111. Residues L179, E199, R204, 266–268 (LGL), and 291–292 (IT) each bind NAD(+).

Belongs to the zinc-containing alcohol dehydrogenase family. Homotetramer. Zn(2+) is required as a cofactor.

The protein resides in the cytoplasm. It carries out the reaction L-threonine + NAD(+) = (2S)-2-amino-3-oxobutanoate + NADH + H(+). Its pathway is amino-acid degradation; L-threonine degradation via oxydo-reductase pathway; glycine from L-threonine: step 1/2. Functionally, catalyzes the NAD(+)-dependent oxidation of L-threonine to 2-amino-3-ketobutyrate. This is L-threonine 3-dehydrogenase from Pyrococcus abyssi (strain GE5 / Orsay).